The following is a 1151-amino-acid chain: Nardilysin (1151 aa).

Residues 1–20 form the signal peptide; the sequence is MLRRVTVAAVCATRRKLCEA. 2 disordered regions span residues 53 to 108 and 133 to 207; these read RNKA…KSPS and MEGK…KKTT. A phosphoserine mark is found at Ser-86, Ser-94, and Ser-96. Positions 141–198 are enriched in acidic residues; the sequence is TDDEEEEEVEEEEEDDDEDSGAEIEDDDEEGFDDEDEFDDEHDDDLDTEDNELEELEE. His-233 contributes to the Zn(2+) binding site. Glu-236 acts as the Proton acceptor in catalysis. Zn(2+) contacts are provided by His-237 and Glu-314.

Belongs to the peptidase M16 family. In terms of assembly, interacts with BACE1 and NRG1. It depends on Zn(2+) as a cofactor. As to expression, primarily in adult heart, skeletal muscle, and testis and at much lower levels in other tissues.

It is found in the mitochondrion. Its subcellular location is the cell projection. It localises to the dendrite. The catalysed reaction is Hydrolysis of polypeptides, preferably at -Xaa-|-Arg-Lys-, and less commonly at -Arg-|-Arg-Xaa-, in which Xaa is not Arg or Lys.. Functionally, cleaves peptide substrates on the N-terminus of arginine residues in dibasic pairs. Is a critical activator of BACE1- and ADAM17-mediated pro-neuregulin ectodomain shedding, involved in the positive regulation of axonal maturation and myelination. Required for proper functioning of 2-oxoglutarate dehydrogenase (OGDH). The polypeptide is Nardilysin (Homo sapiens (Human)).